The primary structure comprises 80 residues: Ubiquinol-cytochrome c reductase complex assembly factor 5 (80 aa).

Topologically, residues 1-19 are mitochondrial matrix; the sequence is MFSRAQVRRALQRVPGKQR. The helical transmembrane segment at 20 to 41 threads the bilayer; that stretch reads FGIYRFLPFFFVLGGAMEWIMI. The Mitochondrial intermembrane portion of the chain corresponds to 42-80; the sequence is KVRVGQETFYDVYRRKASERQYQRRLEDTSETNLHKLIK.

The protein belongs to the UQCC5 family. In terms of assembly, associates with the mitochondrial ribosome. Interacts with UQCC6. Interacts with MT-CYB; interacts with newly synthesizes MT-CYB. Forms a complex, named COMB/coordinator of mitochondrial CYTB biogenesis, composed of UQCC1, UQCC2, UQCC4, UQCC5 and UQCC6; stabilizes nascent cytochrome b/MT-CYB and promotes its membrane insertion.

Its subcellular location is the mitochondrion inner membrane. In terms of biological role, required for the assembly and stability of the mitochondrial ubiquinol-cytochrome c reductase complex (complex III (CIII) or cytochrome b-c1 complex), a multisubunit transmembrane complex that is part of the mitochondrial electron transport chain (ETC) which drives oxidative phosphorylation. Mediates early complex III biogenesis. Participates in regulating the levels of electron transport chain proteins, and therefore energy supply, in response to changes in energy demand. Also required for cytochrome c oxidase complex (complex IV) assembly. The sequence is that of Ubiquinol-cytochrome c reductase complex assembly factor 5 from Mus musculus (Mouse).